A 421-amino-acid chain; its full sequence is Testin (421 aa).

The PET domain occupies 92–199; it reads MILTNPVAAK…GDVKLPREMD (108 aa). The interval 133-164 is disordered; sequence EKQPVAGSEGAQYRKKQLAKQLPAHDQDPSKC. The span at 155 to 164 shows a compositional bias: basic and acidic residues; the sequence is PAHDQDPSKC. LIM zinc-binding domains are found at residues 234 to 297, 299 to 359, and 362 to 421; these read YSCY…CDSE, PRCA…NHAV, and QGCH…KMMS.

The protein belongs to the prickle / espinas / testin family. Interacts via LIM domain 1 with ZYX. Interacts (via LIM domain 3) with ENAH and VASP. Interacts with ALKBH4, talin, actin, alpha-actinin, GRIP1 and PXN. Interacts (via LIM domain 2) with ACTL7A (via N-terminus). Heterodimer with ACTL7A; the heterodimer interacts with ENAH to form a heterotrimer.

The protein localises to the cytoplasm. The protein resides in the cell junction. It localises to the focal adhesion. Functionally, scaffold protein that may play a role in cell adhesion, cell spreading and in the reorganization of the actin cytoskeleton. Plays a role in the regulation of cell proliferation. May act as a tumor suppressor. In Mustela putorius furo (European domestic ferret), this protein is Testin (TES).